The chain runs to 177 residues: Disulfide bond formation protein B (177 aa).

Residues 1-14 (MLIFFKNLSMKRST) are Cytoplasmic-facing. Residues 15–31 (WILLFISALVLESTALY) traverse the membrane as a helical segment. Residues 32-49 (FQHGMGLNPCVMCIYERV) lie on the Periplasmic side of the membrane. An intrachain disulfide couples Cys41 to Cys44. A helical membrane pass occupies residues 50 to 65 (AILGILFSGLIGCIAP). Residues 66 to 72 (KWLVLRI) are Cytoplasmic-facing. Residues 73 to 90 (LALLIGLGSAVKGLLLAI) traverse the membrane as a helical segment. Residues 91–145 (KHLDYQINVYPWNQCAMVPDFPQTLPLDKWFPNIFMPSGSCSDITWSFLGFSMVQ) lie on the Periplasmic side of the membrane. Cysteines 105 and 131 form a disulfide. Residues 146–164 (WIIVIFACYFLFFIILSIS) traverse the membrane as a helical segment. Residues 165–177 (QFKKVRKNRMLFR) are Cytoplasmic-facing.

It belongs to the DsbB family.

It is found in the cell inner membrane. In terms of biological role, required for disulfide bond formation in some periplasmic proteins. Acts by oxidizing the DsbA protein. This chain is Disulfide bond formation protein B, found in Histophilus somni (strain 129Pt) (Haemophilus somnus).